The following is a 422-amino-acid chain: Trigger factor (422 aa).

The PPIase FKBP-type domain maps to 158 to 242 (GDFAVVSLES…VKGLRKKELP (85 aa)).

Belongs to the FKBP-type PPIase family. Tig subfamily.

The protein localises to the cytoplasm. The catalysed reaction is [protein]-peptidylproline (omega=180) = [protein]-peptidylproline (omega=0). In terms of biological role, involved in protein export. Acts as a chaperone by maintaining the newly synthesized protein in an open conformation. Functions as a peptidyl-prolyl cis-trans isomerase. The protein is Trigger factor of Solibacter usitatus (strain Ellin6076).